Here is a 282-residue protein sequence, read N- to C-terminus: MRLFKKRNTISERHVKANKRAEDLVPSGLMQRCPNCGLEFFARRLDKYKTCPDCDYGFRLTARERLAWLCEESEEWFKDIQPSDPLHFPNYEAKVAAGKKKTGLNEAVWTGLAKIGGQETALAIMDPFFIMGSLGQMTGEKLTRLIEAATEKRLPVVVFTASGGARMQEGIYSLMQMAKVVNAINRHKAAGLLYLVVLTDPTTGGVTASFASEGDITLAEAHAMVAFAGRRVIEQTIHEQLPKDAQRAETVLKHGFIDRIVLRQEEKETLAWLLKYGGMQDD.

The CoA carboxyltransferase N-terminal domain maps to 29–282 (LMQRCPNCGL…LLKYGGMQDD (254 aa)). Zn(2+)-binding residues include Cys33, Cys36, Cys51, and Cys54. A C4-type zinc finger spans residues 33–54 (CPNCGLEFFARRLDKYKTCPDC).

Belongs to the AccD/PCCB family. As to quaternary structure, acetyl-CoA carboxylase is a heterohexamer composed of biotin carboxyl carrier protein (AccB), biotin carboxylase (AccC) and two subunits each of ACCase subunit alpha (AccA) and ACCase subunit beta (AccD). It depends on Zn(2+) as a cofactor.

The protein localises to the cytoplasm. The catalysed reaction is N(6)-carboxybiotinyl-L-lysyl-[protein] + acetyl-CoA = N(6)-biotinyl-L-lysyl-[protein] + malonyl-CoA. Its pathway is lipid metabolism; malonyl-CoA biosynthesis; malonyl-CoA from acetyl-CoA: step 1/1. In terms of biological role, component of the acetyl coenzyme A carboxylase (ACC) complex. Biotin carboxylase (BC) catalyzes the carboxylation of biotin on its carrier protein (BCCP) and then the CO(2) group is transferred by the transcarboxylase to acetyl-CoA to form malonyl-CoA. The sequence is that of Acetyl-coenzyme A carboxylase carboxyl transferase subunit beta from Lactobacillus delbrueckii subsp. bulgaricus (strain ATCC BAA-365 / Lb-18).